A 335-amino-acid chain; its full sequence is Large ribosomal subunit protein uL3 (335 aa).

Belongs to the universal ribosomal protein uL3 family. Part of the 50S ribosomal subunit. Forms a cluster with proteins L14 and L24e.

One of the primary rRNA binding proteins, it binds directly near the 3'-end of the 23S rRNA, where it nucleates assembly of the 50S subunit. The chain is Large ribosomal subunit protein uL3 from Methanocaldococcus jannaschii (strain ATCC 43067 / DSM 2661 / JAL-1 / JCM 10045 / NBRC 100440) (Methanococcus jannaschii).